Reading from the N-terminus, the 266-residue chain is 3-methyl-2-oxobutanoate hydroxymethyltransferase (266 aa).

Residues Asp45 and Asp84 each coordinate Mg(2+). Residues 45–46 (DS), Asp84, and Lys113 contribute to the 3-methyl-2-oxobutanoate site. Residue Glu115 participates in Mg(2+) binding. Catalysis depends on Glu183, which acts as the Proton acceptor.

The protein belongs to the PanB family. In terms of assembly, homodecamer; pentamer of dimers. It depends on Mg(2+) as a cofactor.

The protein localises to the cytoplasm. It carries out the reaction 3-methyl-2-oxobutanoate + (6R)-5,10-methylene-5,6,7,8-tetrahydrofolate + H2O = 2-dehydropantoate + (6S)-5,6,7,8-tetrahydrofolate. It functions in the pathway cofactor biosynthesis; (R)-pantothenate biosynthesis; (R)-pantoate from 3-methyl-2-oxobutanoate: step 1/2. In terms of biological role, catalyzes the reversible reaction in which hydroxymethyl group from 5,10-methylenetetrahydrofolate is transferred onto alpha-ketoisovalerate to form ketopantoate. The protein is 3-methyl-2-oxobutanoate hydroxymethyltransferase of Coxiella burnetii (strain CbuG_Q212) (Coxiella burnetii (strain Q212)).